Reading from the N-terminus, the 465-residue chain is Zinc finger and BTB domain-containing protein 32 (465 aa).

One can recognise a BTB domain in the interval 29–87 (CDTLITVGGLEFPAHSLVLAGASPRLGCRGRWALVEDISPSTFAQILTFVYGESIELQP). Disordered stretches follow at residues 111–179 (RAQK…EMAG) and 285–310 (QNQL…PWQI). Basic and acidic residues-rich tracts occupy residues 123 to 139 (PGLK…RGSE) and 147 to 176 (EKQK…ERPE). C2H2-type zinc fingers lie at residues 350–372 (YSCS…YRVH), 378–400 (FSCS…LRTH), and 405–427 (YRCP…MRGH).

This sequence belongs to the krueppel C2H2-type zinc-finger protein family. Homodimer (via PTB domain). Interacts with the N-terminal of FANCC. Interacts with ZBTB16. Interacts with GATA3. Isoform 1 is testis-specific and is not expressed in lymphoid organs such as thymus or spleen. Isoform 2 is expressed in both B- and T-lymphoid cells.

The protein localises to the nucleus. In terms of biological role, DNA-binding protein that binds to the to a 5'-TGTACAGTGT-3' core sequence. May function as a transcriptional transactivator and transcriptional repressor. Probably exerts its repressor effect by preventing GATA3 from binding to DNA. May play a role in regulating the differentiation and activation of helper T-cells. In Mus musculus (Mouse), this protein is Zinc finger and BTB domain-containing protein 32 (Zbtb32).